A 264-amino-acid polypeptide reads, in one-letter code: Movement protein (264 aa).

Residues 211-264 (RTKSSKRGPKNNNNLGKGRSGGRPKPKSFDEVEKEFDNLIEDEAETSVADSDSY) form a disordered region. Residues 237–247 (KSFDEVEKEFD) are compositionally biased toward basic and acidic residues.

Belongs to the tobamovirus movement protein family. Binds to host RBCS at the plasmodesmata; this interaction seems required for viral systemic movement. In resistant plants, interacts with host MBP2C at host microtubules; this interaction prevents virus cell to cell movement. In resistant plants, interacts with host resistance (R) protein (e.g. tomato ToMV resistance protein TM-2(2), AC Q71BG9) at the host plasma membrane; this interaction triggers host defense responses leading to programmed cell death.

It localises to the host cytoplasm. Its subcellular location is the host cytoskeleton. It is found in the host cell junction. The protein resides in the host plasmodesma. Functionally, transports viral genome to neighboring plant cells directly through plasmosdesmata, without any budding. The movement protein allows efficient cell to cell propagation, by bypassing the host cell wall barrier. Forms a ribonucleoprotein complex with viral RNA. Binds microtubules and modulates microtubule stability. Can bind double-stranded DNA. Triggers host hypersensitive defense reaction in incompatible plants harboring resistance (R) proteins. The sequence is that of Movement protein (MP) from Antirrhinum majus (Garden snapdragon).